The chain runs to 588 residues: Adenine deaminase (588 aa).

Belongs to the metallo-dependent hydrolases superfamily. Adenine deaminase family. As to quaternary structure, homodimer. It depends on Mn(2+) as a cofactor.

The catalysed reaction is adenine + H2O + H(+) = hypoxanthine + NH4(+). This Escherichia coli (strain K12 / DH10B) protein is Adenine deaminase.